Consider the following 982-residue polypeptide: Serine/threonine-protein kinase PknD (982 aa).

The Protein kinase domain maps to 51 to 342 (YQIIKSIGKG…ELIRDIENYL (292 aa)). Residues 57–65 (IGKGGMGEV) and Lys-80 each bind ATP. Asp-186 serves as the catalytic Proton acceptor.

This sequence belongs to the protein kinase superfamily. Ser/Thr protein kinase family. Autophosphorylated on serine and threonine residues.

The catalysed reaction is L-seryl-[protein] + ATP = O-phospho-L-seryl-[protein] + ADP + H(+). It carries out the reaction L-threonyl-[protein] + ATP = O-phospho-L-threonyl-[protein] + ADP + H(+). Functionally, together with the serine/threonine kinase Pkn1, may play a role in the specific interactions with host proteins during intracellular growth. The polypeptide is Serine/threonine-protein kinase PknD (Protochlamydia amoebophila (strain UWE25)).